Here is a 258-residue protein sequence, read N- to C-terminus: Dihydroorotate dehydrogenase B (NAD(+)), electron transfer subunit (258 aa).

Residues Met-1–Pro-101 form the FAD-binding FR-type domain. FAD is bound by residues Arg-52–Ser-55, Ile-69–Arg-71, and Gly-76–Thr-77. Residues Cys-220, Cys-225, Cys-228, and Cys-243 each coordinate [2Fe-2S] cluster.

This sequence belongs to the PyrK family. In terms of assembly, heterotetramer of 2 PyrK and 2 PyrD type B subunits. [2Fe-2S] cluster is required as a cofactor. FAD serves as cofactor.

Its pathway is pyrimidine metabolism; UMP biosynthesis via de novo pathway; orotate from (S)-dihydroorotate (NAD(+) route): step 1/1. Functionally, responsible for channeling the electrons from the oxidation of dihydroorotate from the FMN redox center in the PyrD type B subunit to the ultimate electron acceptor NAD(+). The polypeptide is Dihydroorotate dehydrogenase B (NAD(+)), electron transfer subunit (Bacillus pumilus (strain SAFR-032)).